A 123-amino-acid chain; its full sequence is Small ribosomal subunit protein uS12 (123 aa).

Residues Met1 to Arg30 form a disordered region. Basic and acidic residues predominate over residues Gly11–Lys20. Residue Asp89 is modified to 3-methylthioaspartic acid.

It belongs to the universal ribosomal protein uS12 family. Part of the 30S ribosomal subunit. Contacts proteins S8 and S17. May interact with IF1 in the 30S initiation complex.

In terms of biological role, with S4 and S5 plays an important role in translational accuracy. Functionally, interacts with and stabilizes bases of the 16S rRNA that are involved in tRNA selection in the A site and with the mRNA backbone. Located at the interface of the 30S and 50S subunits, it traverses the body of the 30S subunit contacting proteins on the other side and probably holding the rRNA structure together. The combined cluster of proteins S8, S12 and S17 appears to hold together the shoulder and platform of the 30S subunit. The chain is Small ribosomal subunit protein uS12 (rpsL) from Streptomyces avermitilis (strain ATCC 31267 / DSM 46492 / JCM 5070 / NBRC 14893 / NCIMB 12804 / NRRL 8165 / MA-4680).